Here is a 65-residue protein sequence, read N- to C-terminus: Large ribosomal subunit protein bL35 (65 aa).

Residues 1–15 (MPKMKTKKSASKRFT) are compositionally biased toward basic residues. The tract at residues 1–27 (MPKMKTKKSASKRFTARPNGSFKRGQA) is disordered.

It belongs to the bacterial ribosomal protein bL35 family.

The sequence is that of Large ribosomal subunit protein bL35 from Cupriavidus pinatubonensis (strain JMP 134 / LMG 1197) (Cupriavidus necator (strain JMP 134)).